The chain runs to 96 residues: Large ribosomal subunit protein bL28 (96 aa).

A compositionally biased stretch (polar residues) spans 1-22 (MSRSCELTGKGVQSGNNVSHAN). The interval 1 to 24 (MSRSCELTGKGVQSGNNVSHANNK) is disordered.

The protein belongs to the bacterial ribosomal protein bL28 family.

This Sinorhizobium medicae (strain WSM419) (Ensifer medicae) protein is Large ribosomal subunit protein bL28.